Consider the following 219-residue polypeptide: ADP-sugar pyrophosphatase (219 aa).

An N-acetylmethionine modification is found at M1. Residues S3 and S10 each carry the phosphoserine modification. W28 is a binding site for substrate. K42 participates in a covalent cross-link: Glycyl lysine isopeptide (Lys-Gly) (interchain with G-Cter in SUMO2). The residue at position 45 (T45) is a Phosphothreonine. Residues 46 to 47 and R51 each bind substrate; that span reads WE. The region spanning 57–197 is the Nudix hydrolase domain; the sequence is QTADGVAVIP…EEHLTVDARV (141 aa). Y74 carries the phosphotyrosine modification. R84 provides a ligand contact to substrate. Mg(2+) is bound at residue A96. A Nudix box motif is present at residues 97–118; it reads GLIDDGETPEAAALRELEEETG. Residue L98 participates in substrate binding. The Mg(2+) site is built by E112 and E116. D133 is a substrate binding site. Residue E166 coordinates Mg(2+). 2 positions are modified to N6-acetyllysine: K210 and K218.

The protein belongs to the Nudix hydrolase family. In terms of assembly, homodimer. Interacts with PARG. Mg(2+) serves as cofactor. Post-translationally, phosphorylation at Thr-45 is required for homodimer stability; dephosphorylation results in destabilization of the homodimer. Dephosphorylation at Thr-45 promotes the ATP-synthesis activity. Widely expressed. Most abundant in liver.

Its subcellular location is the nucleus. It catalyses the reaction D-ribose 5-phosphate + ATP + H(+) = ADP-D-ribose + diphosphate. It carries out the reaction ADP-D-ribose + H2O = D-ribose 5-phosphate + AMP + 2 H(+). The catalysed reaction is 8-oxo-dGDP + H2O = 8-oxo-dGMP + phosphate + H(+). Its function is as follows. Enzyme that can either act as an ADP-sugar pyrophosphatase in absence of diphosphate or catalyze the synthesis of ATP in presence of diphosphate. In absence of diphosphate, hydrolyzes with similar activities various modified nucleoside diphosphates such as ADP-ribose, ADP-mannose, ADP-glucose, 8-oxo-GDP and 8-oxo-dGDP. Can also hydrolyze other nucleotide sugars with low activity. In presence of diphosphate, mediates the synthesis of ATP in the nucleus by catalyzing the conversion of ADP-ribose to ATP and ribose 5-phosphate. Nuclear ATP synthesis takes place when dephosphorylated at Thr-45. Nuclear ATP generation is required for extensive chromatin remodeling events that are energy-consuming. Does not play a role in U8 snoRNA decapping activity. Binds U8 snoRNA. The protein is ADP-sugar pyrophosphatase (NUDT5) of Homo sapiens (Human).